Consider the following 443-residue polypeptide: ATP-dependent protease ATPase subunit HslU (443 aa).

ATP-binding positions include Ile-18, Gly-60–Glu-65, Asp-256, Glu-321, and Arg-393.

Belongs to the ClpX chaperone family. HslU subfamily. In terms of assembly, a double ring-shaped homohexamer of HslV is capped on each side by a ring-shaped HslU homohexamer. The assembly of the HslU/HslV complex is dependent on binding of ATP.

It is found in the cytoplasm. In terms of biological role, ATPase subunit of a proteasome-like degradation complex; this subunit has chaperone activity. The binding of ATP and its subsequent hydrolysis by HslU are essential for unfolding of protein substrates subsequently hydrolyzed by HslV. HslU recognizes the N-terminal part of its protein substrates and unfolds these before they are guided to HslV for hydrolysis. In Edwardsiella ictaluri (strain 93-146), this protein is ATP-dependent protease ATPase subunit HslU.